The chain runs to 564 residues: Threonine--tRNA ligase (564 aa).

The interval 167-464 (DHRAIGKRLE…LLEKTHGNLP (298 aa)) is catalytic. Residues cysteine 260, histidine 311, and histidine 441 each contribute to the Zn(2+) site.

Belongs to the class-II aminoacyl-tRNA synthetase family. As to quaternary structure, homodimer. The cofactor is Zn(2+).

It localises to the cytoplasm. It carries out the reaction tRNA(Thr) + L-threonine + ATP = L-threonyl-tRNA(Thr) + AMP + diphosphate + H(+). Its function is as follows. Catalyzes the attachment of threonine to tRNA(Thr) in a two-step reaction: L-threonine is first activated by ATP to form Thr-AMP and then transferred to the acceptor end of tRNA(Thr). Also edits incorrectly charged L-seryl-tRNA(Thr). This is Threonine--tRNA ligase from Mycoplasma pneumoniae (strain ATCC 29342 / M129 / Subtype 1) (Mycoplasmoides pneumoniae).